A 211-amino-acid chain; its full sequence is Probable molybdenum cofactor guanylyltransferase (211 aa).

GTP contacts are provided by residues 21 to 23, Lys33, Asp84, and Asp116; that span reads LAG. Asp116 lines the Mg(2+) pocket.

The protein belongs to the MobA family. Requires Mg(2+) as cofactor.

The protein resides in the cytoplasm. It carries out the reaction Mo-molybdopterin + GTP + H(+) = Mo-molybdopterin guanine dinucleotide + diphosphate. Transfers a GMP moiety from GTP to Mo-molybdopterin (Mo-MPT) cofactor (Moco or molybdenum cofactor) to form Mo-molybdopterin guanine dinucleotide (Mo-MGD) cofactor. This chain is Probable molybdenum cofactor guanylyltransferase, found in Rhodopirellula baltica (strain DSM 10527 / NCIMB 13988 / SH1).